A 122-amino-acid chain; its full sequence is Large ribosomal subunit protein uL14 (122 aa).

This sequence belongs to the universal ribosomal protein uL14 family. As to quaternary structure, part of the 50S ribosomal subunit. Forms a cluster with proteins L3 and L19. In the 70S ribosome, L14 and L19 interact and together make contacts with the 16S rRNA in bridges B5 and B8.

Functionally, binds to 23S rRNA. Forms part of two intersubunit bridges in the 70S ribosome. This Thermobifida fusca (strain YX) protein is Large ribosomal subunit protein uL14.